Reading from the N-terminus, the 792-residue chain is Lon protease (792 aa).

One can recognise a Lon N-terminal domain in the interval 16-211 (DAVVVVPVSN…KVSAFLAQRL (196 aa)). An ATP-binding site is contributed by 361–368 (GPPGVGKT). Residues 597-778 (TSVPGVATGL…EDAIEAGLDP (182 aa)) enclose the Lon proteolytic domain. Active-site residues include Ser-684 and Lys-727.

Belongs to the peptidase S16 family. As to quaternary structure, homohexamer. Organized in a ring with a central cavity.

It localises to the cytoplasm. It carries out the reaction Hydrolysis of proteins in presence of ATP.. Functionally, ATP-dependent serine protease that mediates the selective degradation of mutant and abnormal proteins as well as certain short-lived regulatory proteins. Required for cellular homeostasis and for survival from DNA damage and developmental changes induced by stress. Degrades polypeptides processively to yield small peptide fragments that are 5 to 10 amino acids long. Binds to DNA in a double-stranded, site-specific manner. The protein is Lon protease of Phenylobacterium zucineum (strain HLK1).